A 344-amino-acid chain; its full sequence is Holliday junction branch migration complex subunit RuvB (344 aa).

Positions 1–10 (MAIQSSSSGS) are enriched in low complexity. The segment at 1 to 37 (MAIQSSSSGSKPPAPKRLVAPEATAAEGDGGRDEGLR) is disordered. Residues 13–197 (PAPKRLVAPE…FGLIQRLEFY (185 aa)) form a large ATPase domain (RuvB-L) region. Residues L36, R37, G78, K81, T82, T83, 144–146 (EDF), R187, Y197, and R234 each bind ATP. Mg(2+) is bound at residue T82. The small ATPAse domain (RuvB-S) stretch occupies residues 198 to 268 (SCSDLEAIVS…VVVEALAMHR (71 aa)). Positions 271–344 (GRGLDPSDRR…DAGRAHLEAA (74 aa)) are head domain (RuvB-H). R326 and R331 together coordinate DNA.

Belongs to the RuvB family. As to quaternary structure, homohexamer. Forms an RuvA(8)-RuvB(12)-Holliday junction (HJ) complex. HJ DNA is sandwiched between 2 RuvA tetramers; dsDNA enters through RuvA and exits via RuvB. An RuvB hexamer assembles on each DNA strand where it exits the tetramer. Each RuvB hexamer is contacted by two RuvA subunits (via domain III) on 2 adjacent RuvB subunits; this complex drives branch migration. In the full resolvosome a probable DNA-RuvA(4)-RuvB(12)-RuvC(2) complex forms which resolves the HJ.

It is found in the cytoplasm. The catalysed reaction is ATP + H2O = ADP + phosphate + H(+). The RuvA-RuvB-RuvC complex processes Holliday junction (HJ) DNA during genetic recombination and DNA repair, while the RuvA-RuvB complex plays an important role in the rescue of blocked DNA replication forks via replication fork reversal (RFR). RuvA specifically binds to HJ cruciform DNA, conferring on it an open structure. The RuvB hexamer acts as an ATP-dependent pump, pulling dsDNA into and through the RuvAB complex. RuvB forms 2 homohexamers on either side of HJ DNA bound by 1 or 2 RuvA tetramers; 4 subunits per hexamer contact DNA at a time. Coordinated motions by a converter formed by DNA-disengaged RuvB subunits stimulates ATP hydrolysis and nucleotide exchange. Immobilization of the converter enables RuvB to convert the ATP-contained energy into a lever motion, pulling 2 nucleotides of DNA out of the RuvA tetramer per ATP hydrolyzed, thus driving DNA branch migration. The RuvB motors rotate together with the DNA substrate, which together with the progressing nucleotide cycle form the mechanistic basis for DNA recombination by continuous HJ branch migration. Branch migration allows RuvC to scan DNA until it finds its consensus sequence, where it cleaves and resolves cruciform DNA. The chain is Holliday junction branch migration complex subunit RuvB from Synechococcus sp. (strain RCC307).